Here is a 267-residue protein sequence, read N- to C-terminus: Staphylococcal secretory antigen ssaA2 (267 aa).

A signal peptide spans 1 to 27; it reads MKKIATATIATAGFATIAIASGNQAHA. Tandem repeats lie at residues 83–85, 86–88, 89–91, 95–97, 101–103, 104–106, and 113–115. Residues 83-115 are 7 X 3 AA repeats of Y-[NS]-N; that stretch reads YNNYNNYNNGYSYNNYSRYNNYSNNNQSYNYNN. The 122-residue stretch at 146–267 folds into the Peptidase C51 domain; the sequence is MAPSSNGRSI…SQAAGYNFIH (122 aa).

It localises to the secreted. Not known; immunogenic protein. The protein is Staphylococcal secretory antigen ssaA2 (ssaA2) of Staphylococcus aureus (strain NCTC 8325 / PS 47).